We begin with the raw amino-acid sequence, 384 residues long: MALRRCLPQYSTTSSYLSKIWGFRMHGTKAAASVVEEHVSGAEREDEEYADVDWDNLGFSLVRTDFMFATKSCRDGNFEQGYLSRYGNIELNPAAGILNYGQGLIEGMKAYRGEDGRVLLFRPELNAMRMKIGAERMCMHSPSVHQFIEGVKQTVLANRRWVPPPGKGSLYLRPLLFGSGASLGVAAASEYTFLVFGSPVQNYFKEGTAALNLYVEEVIPRAYLGGTGGVKAISNYGPVLEVMRRAKSRGFSDVLYLDADTGKNIEEVSAANIFLVKGNTIVTPATSGTILGGITRKSIIEIALDLGYKVEERSVPVEELKEAEEVFCTGTAAGVASVGSITFKNTRTEYKVGDGIVTQQLRSILVGIQTGSIQDTKDWVLQIA.

Residues 1–18 constitute a mitochondrion transit peptide; that stretch reads MALRRCLPQYSTTSSYLS. The residue at position 231 (Lys231) is an N6-(pyridoxal phosphate)lysine.

Belongs to the class-IV pyridoxal-phosphate-dependent aminotransferase family. Pyridoxal 5'-phosphate serves as cofactor.

It is found in the mitochondrion. The catalysed reaction is L-leucine + 2-oxoglutarate = 4-methyl-2-oxopentanoate + L-glutamate. The enzyme catalyses L-isoleucine + 2-oxoglutarate = (S)-3-methyl-2-oxopentanoate + L-glutamate. It carries out the reaction L-valine + 2-oxoglutarate = 3-methyl-2-oxobutanoate + L-glutamate. The protein operates within amino-acid degradation; L-leucine degradation; 4-methyl-2-oxopentanoate from L-leucine (aminotransferase route): step 1/1. It functions in the pathway amino-acid degradation; L-valine degradation. In terms of biological role, converts 2-oxo acids to branched-chain amino acids. Acts on leucine, isoleucine and valine. The protein is Branched-chain-amino-acid aminotransferase 1, mitochondrial (BCAT1) of Arabidopsis thaliana (Mouse-ear cress).